The primary structure comprises 166 residues: Heavy metal-associated isoprenylated plant protein 45 (166 aa).

An HMA domain is found at leucine 15 to glutamate 78. Cysteine 26 and cysteine 29 together coordinate a metal cation. At cysteine 163 the chain carries Cysteine methyl ester. Cysteine 163 is lipidated: S-farnesyl cysteine. A propeptide spans threonine 164 to methionine 166 (removed in mature form).

Belongs to the HIPP family.

Heavy-metal-binding protein. The protein is Heavy metal-associated isoprenylated plant protein 45 of Arabidopsis thaliana (Mouse-ear cress).